We begin with the raw amino-acid sequence, 172 residues long: NADH-quinone oxidoreductase subunit B (172 aa).

[4Fe-4S] cluster-binding residues include cysteine 52, cysteine 53, cysteine 117, and cysteine 147.

It belongs to the complex I 20 kDa subunit family. In terms of assembly, NDH-1 is composed of 14 different subunits. Subunits NuoB, C, D, E, F, and G constitute the peripheral sector of the complex. [4Fe-4S] cluster is required as a cofactor.

Its subcellular location is the cell inner membrane. It catalyses the reaction a quinone + NADH + 5 H(+)(in) = a quinol + NAD(+) + 4 H(+)(out). Functionally, NDH-1 shuttles electrons from NADH, via FMN and iron-sulfur (Fe-S) centers, to quinones in the respiratory chain. Couples the redox reaction to proton translocation (for every two electrons transferred, four hydrogen ions are translocated across the cytoplasmic membrane), and thus conserves the redox energy in a proton gradient. The protein is NADH-quinone oxidoreductase subunit B of Ehrlichia ruminantium (strain Gardel).